The chain runs to 536 residues: Cytochrome P450 monooxygenase pbrC (536 aa).

A helical membrane pass occupies residues 20-39 (VMLPALVGFAFLIYQAFFAI). C479 contributes to the heme binding site.

This sequence belongs to the cytochrome P450 family. Requires heme as cofactor.

Its subcellular location is the membrane. It participates in secondary metabolite biosynthesis; terpenoid biosynthesis. Functionally, cytochrome P450 monooxygenase; part of the gene cluster that mediates the biosynthesis of the sesquiterpenoid aspterric acid (AA), an inhibitor of dihydroxy-acid dehydratase (DHAD) effective as an herbicide. PbrC catalyzes the third and last step within the pathway and converts the alpha-epoxy carboxylate intermediate produced by the cytochrome P450 monooxygenase pbrB from (-)daucane into the tricyclic aspterric acid. This Penicillium brasilianum protein is Cytochrome P450 monooxygenase pbrC.